The following is a 276-amino-acid chain: ADP-dependent (S)-NAD(P)H-hydrate dehydratase (276 aa).

Residues 7–275 form the YjeF C-terminal domain; sequence TEEHVRATLP…DILPRVWKRF (269 aa). Residues Ala42, Gly104, and His149 each contribute to the (6S)-NADPHX site. AMP-binding positions include 186-190 and Gly215; that span reads KGNQT. Asp216 is a (6S)-NADPHX binding site.

It belongs to the NnrD/CARKD family. In terms of assembly, homotetramer. Mg(2+) is required as a cofactor.

The enzyme catalyses (6S)-NADHX + ADP = AMP + phosphate + NADH + H(+). It catalyses the reaction (6S)-NADPHX + ADP = AMP + phosphate + NADPH + H(+). Its function is as follows. Catalyzes the dehydration of the S-form of NAD(P)HX at the expense of ADP, which is converted to AMP. Together with NAD(P)HX epimerase, which catalyzes the epimerization of the S- and R-forms, the enzyme allows the repair of both epimers of NAD(P)HX, a damaged form of NAD(P)H that is a result of enzymatic or heat-dependent hydration. The chain is ADP-dependent (S)-NAD(P)H-hydrate dehydratase from Bacillus subtilis (strain 168).